A 953-amino-acid polypeptide reads, in one-letter code: Translation initiation factor IF-2 (953 aa).

Residues 53 to 368 (AKKAVAGTSE…PVTERKFHEL (316 aa)) are disordered. Basic and acidic residues-rich tracts occupy residues 135–151 (FKAEREARAKEQAERRK) and 162–190 (RNDRNDRRNNQNDRNDRNSQNRNDRRNRQ). Over residues 191–214 (EQGNQHRNQGQSQYNQQRQSFNQG) the composition is skewed to low complexity. Residues 236-266 (RSSEERFKQAKANKEALREQNKRKEQAKLED) show a composition bias toward basic and acidic residues. Over residues 274–288 (PKPTAKAPATPAPTA) the composition is skewed to low complexity. The span at 301–318 (ARPDKERDNFDHEEDGPR) shows a compositional bias: basic and acidic residues. Over residues 332 to 341 (NQKNSNWNNN) the composition is skewed to low complexity. The region spanning 455-622 (ERPPVVTIMG…TVLLVAEIQE (168 aa)) is the tr-type G domain. Residues 464–471 (GHVDHGKT) form a G1 region. GTP is bound at residue 464–471 (GHVDHGKT). Positions 489–493 (GITQH) are G2. The tract at residues 510 to 513 (DTPG) is G3. GTP contacts are provided by residues 510–514 (DTPGH) and 564–567 (NKID). The tract at residues 564–567 (NKID) is G4. A G5 region spans residues 600-602 (SAK).

Belongs to the TRAFAC class translation factor GTPase superfamily. Classic translation factor GTPase family. IF-2 subfamily.

The protein localises to the cytoplasm. Its function is as follows. One of the essential components for the initiation of protein synthesis. Protects formylmethionyl-tRNA from spontaneous hydrolysis and promotes its binding to the 30S ribosomal subunits. Also involved in the hydrolysis of GTP during the formation of the 70S ribosomal complex. The polypeptide is Translation initiation factor IF-2 (Streptococcus gordonii (strain Challis / ATCC 35105 / BCRC 15272 / CH1 / DL1 / V288)).